A 187-amino-acid chain; its full sequence is Lysozyme C-like protein DDB_G0288143 (187 aa).

A signal peptide spans 1 to 23 (MKVSNLISTITIASALCLSLTNA). 3 cysteine pairs are disulfide-bonded: cysteine 50–cysteine 125, cysteine 74–cysteine 82, and cysteine 78–cysteine 97. Glutamate 55 is a catalytic residue. The tract at residues 133-187 (QHGSHSSTSRDSSSSSSRDSTGTGYSSSGSGTSGSGSNSGQTGHFIPGQSGHGLN) is disordered. Positions 136–175 (SHSSTSRDSSSSSSRDSTGTGYSSSGSGTSGSGSNSGQTG) are enriched in low complexity.

The protein belongs to the glycosyl hydrolase 22 family.

The sequence is that of Lysozyme C-like protein DDB_G0288143 from Dictyostelium discoideum (Social amoeba).